The chain runs to 237 residues: 7-cyano-7-deazaguanine synthase (237 aa).

An ATP-binding site is contributed by 10-20 (FSGGQDSTTCL). Zn(2+) is bound by residues Cys189, Cys198, Cys201, and Cys204.

Belongs to the QueC family. Zn(2+) is required as a cofactor.

It catalyses the reaction 7-carboxy-7-deazaguanine + NH4(+) + ATP = 7-cyano-7-deazaguanine + ADP + phosphate + H2O + H(+). It participates in purine metabolism; 7-cyano-7-deazaguanine biosynthesis. Functionally, catalyzes the ATP-dependent conversion of 7-carboxy-7-deazaguanine (CDG) to 7-cyano-7-deazaguanine (preQ(0)). This is 7-cyano-7-deazaguanine synthase from Aeromonas salmonicida (strain A449).